A 147-amino-acid polypeptide reads, in one-letter code: Basic phospholipase A2 beta-bungarotoxin A2 chain (147 aa).

The N-terminal stretch at 1-19 (MYPAHLLVLSAVCVSLLGA) is a signal peptide. Residues 20–27 (ANIPPYPL) constitute a propeptide that is removed on maturation. Disulfide bonds link C54-C146, C56-C72, C71-C127, C78-C120, C88-C113, and C106-C118. Ca(2+) contacts are provided by Y55, G57, and G59. H75 is an active-site residue. D76 is a Ca(2+) binding site. The active site involves D121.

It belongs to the phospholipase A2 family. Group I subfamily. D49 sub-subfamily. As to quaternary structure, heterodimer; disulfide-linked. The A chains have phospholipase A2 activity and the B chains show homology with the basic protease inhibitors. The cofactor is Ca(2+). Expressed by the venom gland.

Its subcellular location is the secreted. The catalysed reaction is a 1,2-diacyl-sn-glycero-3-phosphocholine + H2O = a 1-acyl-sn-glycero-3-phosphocholine + a fatty acid + H(+). In terms of biological role, snake venom phospholipase A2 (PLA2) that inhibits neuromuscular transmission by blocking acetylcholine release from the nerve termini. PLA2 catalyzes the calcium-dependent hydrolysis of the 2-acyl groups in 3-sn-phosphoglycerides. The sequence is that of Basic phospholipase A2 beta-bungarotoxin A2 chain from Bungarus caeruleus (Indian krait).